A 1630-amino-acid chain; its full sequence is MATFTPLNAASEDLDKEKRTLEIRIEEAVQIYQNALSAQKQGDDNAATKYYDELLNVRILRELPFTVNSNYKKNNALLLLHYLTRKNHGLFLLSKLQSLLSLDPSTDPIPVYRDALLDFAIALACDYNDIELWSFVAELAEKLEMPRIQRFALESSFYTGYEPFDAERVFTNIDDLNPGKLISLQNLYNLLKKLGGIAEPLPQLDLSISSLYTLPSFFPQLPTPSFHRRSINLCPKIKKLQLSHDTLHGFLDLVLYALQINEKKTPTRGFPSTLIIHVHSLNLSTAESHDLESTDSELWSEISDAGPDTNTINTAAKLSEPVYAKDIVPPPSDNLPKPQLLKRPIDDSDVRISKRSRGRDLRTPSESNLFSLIASITSDINEQIQKRFPDATSPFSGESMFREYSSIFEDYHQLLVNFPSEGSIPDLDVSTDSAANGAFSKMILIDLAMHSANRLEHMQVPDGYLLQLLSEVNSLNMVPAELATFFVESMLRPRKLEPPFYLQQCWGKIFKKKFTTICERIESTLHELVKASLQTPEVFNISQSLFELFLDDYFLALKFSSNDQKDDNVSEIPTESLEYKKLRCLRWKSLTEQVVELQPSCKSSSQRHLIIRNSWARNLLLRLTGCSSEAIVENFKQLRCLLQENSDSLELLNSQCMADLSVQVVDFELSKLQTVEFFNTLFMNTKNLDFNAVIKNLEPVLSPENKFAEDPQAKFISQFLEKTSTEFQIHLWYLLYQAYSSAHRPYNSLLCAFQSLKIILIRLCSSSFSIQDAGRRQAELLGMLNFSSNLFRIIWQKLHEQPDILSPCNEMTVIDCIRIILIYLRTFAIYVGIDEDISDQRIPKPSNPEFDSYAQTVKDSLMSGWCIFYTLFAHLLHYDFIKADAQKLLPQILTAIHSQYSFRGYCSSSNQSFLELSQTECQRLDAWENENEILQCVCCRFNLIIGSEYYVPQSHQSDSVNLTSNDAIKIIPFILGFAVKRSHGWVMPRSDQKNALEIICKVIRFPGENNADVYFNKCAIKEFLERDISPQLTKMLLKSNDILGLREIGSKVVDDRVRGLYYAQSQVLFGYYRSRLKGSRCINDLLVIIKYFLLDLYLNPRRQDSWYTCSSVFSSLADEELGWSAEQICLADDVINEYRRKAILCNLMALSLPFTQDKLFKANVYFDFAMNLYASARPPLEMAAFLPSETRVFSGASGLYNLSMKPIEVSKVIALAADYFGMSAELSNDWRALYMLGKACRKCGDMENALVHFEAAAALAPTKSGSGSQQALLIEPHYALLSNLSKAAIEGSVEIVQILSYLRRIRHPPKDSGSLLEVKNEDVNIYKRNALLFILKALAEMRILDKQSWHHRPTYRIAKIMEHLGNVQQAKEEMETLFSYKTSGKSLLNIWRTPNERPGRHFYYGATYSRYLLSLFYKTNDKVNFLQFLKRFRRSSSTIYEHRQIWLDIMIKYLEDLRLQHSVKETQINDLPLVEFKYVYKEISLLDEQKLSLLHQVYEIRKLNNGLYPTIKVDDFLIDCFMSLYNEVKSSISPLDANIPNSPSTITAKPLNDEKAINNENSVKQKTVITRKDVVSKVLALFRPHRETYYRETQNKILQKLASTSSSLVRSFTEDSSQAGESPGIHEEIQ.

The stretch at 8–42 is one TPR 1 repeat; the sequence is NAASEDLDKEKRTLEIRIEEAVQIYQNALSAQKQG. Residues 325-347 form a disordered region; it reads KDIVPPPSDNLPKPQLLKRPIDD. Residues 1230–1263 form a TPR 2 repeat; it reads WRALYMLGKACRKCGDMENALVHFEAAAALAPTK.

The protein belongs to the HIR3 family. As to quaternary structure, interacts with hip1 and slm9.

The protein resides in the nucleus. Its function is as follows. Has a role in a nucleosome assembly pathway that is required for the integrity of heterochromatin and proper chromosome segregation. Required for transcriptional silencing in the outer repeat (otr) region of centromeric repeats and the Tf2 long terminal repeat retrotransposons. This is Histone transcription regulator 3 homolog (hip3) from Schizosaccharomyces pombe (strain 972 / ATCC 24843) (Fission yeast).